A 206-amino-acid polypeptide reads, in one-letter code: Proteasome subunit beta 1 (206 aa).

Positions 1 to 5 (MLMKG) are cleaved as a propeptide — removed in mature form; by autocatalysis. The active-site Nucleophile is Thr-6.

It belongs to the peptidase T1B family. In terms of assembly, the 20S proteasome core is composed of 14 alpha and 14 beta subunits that assemble into four stacked heptameric rings, resulting in a barrel-shaped structure. The two inner rings, each composed of seven catalytic beta subunits, are sandwiched by two outer rings, each composed of seven alpha subunits. The catalytic chamber with the active sites is on the inside of the barrel. Has a gated structure, the ends of the cylinder being occluded by the N-termini of the alpha-subunits. Is capped at one or both ends by the proteasome regulatory ATPase, PAN.

The protein localises to the cytoplasm. It carries out the reaction Cleavage of peptide bonds with very broad specificity.. Its activity is regulated as follows. The formation of the proteasomal ATPase PAN-20S proteasome complex, via the docking of the C-termini of PAN into the intersubunit pockets in the alpha-rings, triggers opening of the gate for substrate entry. Interconversion between the open-gate and close-gate conformations leads to a dynamic regulation of the 20S proteasome proteolysis activity. Functionally, component of the proteasome core, a large protease complex with broad specificity involved in protein degradation. This chain is Proteasome subunit beta 1, found in Korarchaeum cryptofilum (strain OPF8).